A 97-amino-acid chain; its full sequence is Large ribosomal subunit protein bL21 (97 aa).

Belongs to the bacterial ribosomal protein bL21 family. As to quaternary structure, part of the 50S ribosomal subunit. Contacts protein L20.

In terms of biological role, this protein binds to 23S rRNA in the presence of protein L20. This chain is Large ribosomal subunit protein bL21, found in Persephonella marina (strain DSM 14350 / EX-H1).